A 363-amino-acid polypeptide reads, in one-letter code: UDP-N-acetylglucosamine--N-acetylmuramyl-(pentapeptide) pyrophosphoryl-undecaprenol N-acetylglucosamine transferase (363 aa).

UDP-N-acetyl-alpha-D-glucosamine contacts are provided by residues 14–16, R171, S200, and Q290; that span reads TGG.

This sequence belongs to the glycosyltransferase 28 family. MurG subfamily.

Its subcellular location is the cell inner membrane. The catalysed reaction is di-trans,octa-cis-undecaprenyl diphospho-N-acetyl-alpha-D-muramoyl-L-alanyl-D-glutamyl-meso-2,6-diaminopimeloyl-D-alanyl-D-alanine + UDP-N-acetyl-alpha-D-glucosamine = di-trans,octa-cis-undecaprenyl diphospho-[N-acetyl-alpha-D-glucosaminyl-(1-&gt;4)]-N-acetyl-alpha-D-muramoyl-L-alanyl-D-glutamyl-meso-2,6-diaminopimeloyl-D-alanyl-D-alanine + UDP + H(+). Its pathway is cell wall biogenesis; peptidoglycan biosynthesis. Functionally, cell wall formation. Catalyzes the transfer of a GlcNAc subunit on undecaprenyl-pyrophosphoryl-MurNAc-pentapeptide (lipid intermediate I) to form undecaprenyl-pyrophosphoryl-MurNAc-(pentapeptide)GlcNAc (lipid intermediate II). The sequence is that of UDP-N-acetylglucosamine--N-acetylmuramyl-(pentapeptide) pyrophosphoryl-undecaprenol N-acetylglucosamine transferase from Borreliella burgdorferi (strain ATCC 35210 / DSM 4680 / CIP 102532 / B31) (Borrelia burgdorferi).